Reading from the N-terminus, the 640-residue chain is ATP-dependent DNA helicase YoaA (640 aa).

The Helicase ATP-binding domain occupies 16–278 (ELSQNIKGFR…KDMQQLGTTS (263 aa)). Residue 51-58 (AGTGTGKT) coordinates ATP. A [4Fe-4S] cluster-binding site is contributed by Cys114. The DEAH box signature appears at 125-128 (GVLG). Residues Cys174, Cys179, and Cys185 each contribute to the [4Fe-4S] cluster site. The DEAH box motif lies at 231–234 (DEAH). The 177-residue stretch at 458–634 (SLGEILLPVI…SRTRDLNKVI (177 aa)) folds into the Helicase C-terminal domain.

Belongs to the helicase family. DinG subfamily. Requires [4Fe-4S] cluster as cofactor.

It catalyses the reaction Couples ATP hydrolysis with the unwinding of duplex DNA at the replication fork by translocating in the 5'-3' direction. This creates two antiparallel DNA single strands (ssDNA). The leading ssDNA polymer is the template for DNA polymerase III holoenzyme which synthesizes a continuous strand.. It carries out the reaction ATP + H2O = ADP + phosphate + H(+). Its function is as follows. Probably a 5'-3' DNA helicase. This Haemophilus influenzae (strain ATCC 51907 / DSM 11121 / KW20 / Rd) protein is ATP-dependent DNA helicase YoaA.